The sequence spans 166 residues: Monothiol glutaredoxin-3 (166 aa).

The 104-residue stretch at 56-159 folds into the Glutaredoxin domain; sequence DSTDFEVFLE…STLDEWTHNK (104 aa). Cys-76 serves as a coordination point for [2Fe-2S] cluster.

It belongs to the glutaredoxin family. Monothiol subfamily. In terms of assembly, homodimer.

The protein localises to the nucleus. In terms of biological role, monothiol glutaredoxin involved in the biogenesis of iron-sulfur clusters. Binds one iron-sulfur cluster per dimer. The iron-sulfur cluster is bound between subunits, and is complexed by a bound glutathione and a cysteine residue from each subunit. This Schizosaccharomyces pombe (strain 972 / ATCC 24843) (Fission yeast) protein is Monothiol glutaredoxin-3 (grx3).